The sequence spans 633 residues: Chaperone protein HtpG (633 aa).

Residues 1–344 form an a; substrate-binding region; the sequence is MSLQPQAETL…SNDLPLNISR (344 aa). Residues 345–560 form a b region; that stretch reads ELLQSNEVIN…ENEMSGHLQR (216 aa). Residues 561–633 are c; sequence LLIQTGQDFM…KGLNELLLDS (73 aa).

Belongs to the heat shock protein 90 family. Homodimer.

It localises to the cytoplasm. Molecular chaperone. Has ATPase activity. The sequence is that of Chaperone protein HtpG from Coxiella burnetii (strain RSA 331 / Henzerling II).